Reading from the N-terminus, the 115-residue chain is Ribosome-binding factor A (115 aa).

Belongs to the RbfA family. Monomer. Binds 30S ribosomal subunits, but not 50S ribosomal subunits or 70S ribosomes.

It localises to the cytoplasm. Functionally, one of several proteins that assist in the late maturation steps of the functional core of the 30S ribosomal subunit. Associates with free 30S ribosomal subunits (but not with 30S subunits that are part of 70S ribosomes or polysomes). Required for efficient processing of 16S rRNA. May interact with the 5'-terminal helix region of 16S rRNA. This chain is Ribosome-binding factor A, found in Staphylococcus carnosus (strain TM300).